The following is a 390-amino-acid chain: Aspergillopepsin-1 (390 aa).

Residues 1 to 19 (MVNTSLLAALTAYAVAVAA) form the signal peptide. Residues 20–67 (APTAPQVKGFSVNQVAVPKGVYRHPAAQLAKAYGKYHATVPTQVAAAA) constitute a propeptide, activation peptide. One can recognise a Peptidase A1 domain in the interval 84 to 387 (YITQVTVGDD…DASGPRLGFA (304 aa)). Residues Asp-100 and Asp-281 contribute to the active site.

Belongs to the peptidase A1 family. As to quaternary structure, monomer.

Its subcellular location is the secreted. It carries out the reaction Hydrolysis of proteins with broad specificity. Generally favors hydrophobic residues in P1 and P1', but also accepts Lys in P1, which leads to activation of trypsinogen. Does not clot milk.. With respect to regulation, inhibited by the microbial peptide pepstatin A. In terms of biological role, secreted aspartic endopeptidase that allows assimilation of proteinaceous substrates. The scissile peptide bond is attacked by a nucleophilic water molecule activated by two aspartic residues in the active site. Shows a broad primary substrate specificity. Favors hydrophobic residues at the P1 and P1' positions, but also accepts a lysine residue in the P1 position, leading to the activation of trypsinogen and chymotrypsinogen A. Hydrolyzes myoglobin, hemoglobin and other natural proteins. Hydrolyzes equine myoglobin between positions 'Met-1' and 'Gly-2', 'Lys-43' and 'Phe-44', and 'Leu-70' and 'Thr-71'. The protein is Aspergillopepsin-1 (pepA) of Aspergillus pseudoglaucus (Eurotium repens).